The sequence spans 86 residues: BolA-like protein 2 (86 aa).

An N-acetylmethionine modification is found at methionine 1.

The protein belongs to the BolA/IbaG family. As to quaternary structure, interacts with GLRX3; forms a heterotrimeric complex composed by two BOLA2 molecules and one GLRX3 molecule; linked by [2Fe-2S] clusters.

Its subcellular location is the cytoplasm. The protein resides in the nucleus. Acts as a cytosolic iron-sulfur (Fe-S) cluster assembly factor that facilitates [2Fe-2S] cluster insertion into a subset of cytosolic proteins. Acts together with the monothiol glutaredoxin GLRX3. The sequence is that of BolA-like protein 2 (Bola2) from Mus musculus (Mouse).